The following is a 148-amino-acid chain: Nucleoside diphosphate kinase (148 aa).

The ATP site is built by Lys9, Phe57, Arg85, Thr91, Arg102, and Asn112. Thr91 carries the post-translational modification Phosphothreonine. His115 acts as the Pros-phosphohistidine intermediate in catalysis. Position 122 is a phosphoserine (Ser122).

Belongs to the NDK family. As to quaternary structure, homotetramer. Mg(2+) serves as cofactor.

The protein localises to the cytoplasm. The enzyme catalyses a 2'-deoxyribonucleoside 5'-diphosphate + ATP = a 2'-deoxyribonucleoside 5'-triphosphate + ADP. It carries out the reaction a ribonucleoside 5'-diphosphate + ATP = a ribonucleoside 5'-triphosphate + ADP. Its function is as follows. Major role in the synthesis of nucleoside triphosphates other than ATP. The ATP gamma phosphate is transferred to the NDP beta phosphate via a ping-pong mechanism, using a phosphorylated active-site intermediate. This chain is Nucleoside diphosphate kinase, found in Bacillus anthracis.